The chain runs to 21 residues: Phenol-soluble modulin alpha 1 peptide (21 aa).

This sequence belongs to the phenol-soluble modulin alpha peptides family.

Functionally, peptide which can recruit, activate and subsequently lyse human neutrophils, thus eliminating the main cellular defense against infection. This is Phenol-soluble modulin alpha 1 peptide (psmA1) from Staphylococcus aureus (strain Mu3 / ATCC 700698).